The chain runs to 174 residues: Large ribosomal subunit protein uL10 (174 aa).

It belongs to the universal ribosomal protein uL10 family. Part of the ribosomal stalk of the 50S ribosomal subunit. The N-terminus interacts with L11 and the large rRNA to form the base of the stalk. The C-terminus forms an elongated spine to which L12 dimers bind in a sequential fashion forming a multimeric L10(L12)X complex.

Its function is as follows. Forms part of the ribosomal stalk, playing a central role in the interaction of the ribosome with GTP-bound translation factors. The chain is Large ribosomal subunit protein uL10 from Rubrobacter xylanophilus (strain DSM 9941 / JCM 11954 / NBRC 16129 / PRD-1).